Reading from the N-terminus, the 399-residue chain is Phospholipase C (399 aa).

The signal sequence occupies residues 1-28; sequence MNKKKILKFICSAVLSFTLFSGYKSYAW. Positions 28, 38, 83, 95, 153, 157, 163, 175, and 179 each coordinate Zn(2+). Positions 29-277 constitute a Zn-dependent PLC domain; it reads DGKVDGTGTH…NEVSGTINTT (249 aa). A linker region spans residues 275 to 282; that stretch reads NTTENSKI. The PLAT domain occupies 283–399; sequence NEIMVVIKTA…DNKTFYINNK (117 aa). 9 residues coordinate Ca(2+): G298, T299, D300, D320, N321, G323, N324, D325, and D363.

Belongs to the bacterial zinc-metallophospholipase C family. Ca(2+) serves as cofactor. It depends on Zn(2+) as a cofactor.

The protein localises to the secreted. It carries out the reaction a 1,2-diacyl-sn-glycero-3-phosphocholine + H2O = phosphocholine + a 1,2-diacyl-sn-glycerol + H(+). Functionally, bacterial hemolysins are exotoxins that attack blood cell membranes and cause cell rupture. Binds to eukaryotic membranes where it hydrolyzes phosphatidylcholine, sphingomyelin and phosphatidylethanolamine. The diacylglycerol produced can activate both the arachidonic acid pathway, leading to modulation of the inflammatory response cascade and thrombosis, and protein kinase C, leading to activation of eukaryotic phospholipases and further membrane damage. The chain is Phospholipase C (plc) from Clostridium haemolyticum.